The following is a 760-amino-acid chain: Dipeptidyl peptidase 4 (760 aa).

Topologically, residues 1 to 6 (MKTPWK) are cytoplasmic. A helical; Signal-anchor for type II membrane protein transmembrane segment spans residues 7 to 28 (VLLGLLGVAALVTIITVPIVLL). Topologically, residues 29-760 (SKDEAAADSR…HFLQQCFSLH (732 aa)) are extracellular. N-linked (GlcNAc...) asparagine glycosylation is found at Asn83, Asn90, Asn144, Asn213, Asn223, Asn315, and Asn328. Intrachain disulfides connect Cys322–Cys333, Cys379–Cys388, Cys438–Cys441, and Cys448–Cys466. N-linked (GlcNAc...) asparagine glycosylation occurs at Asn514. Ser624 functions as the Charge relay system in the catalytic mechanism. The cysteines at positions 643 and 756 are disulfide-linked. Residue Asn679 is glycosylated (N-linked (GlcNAc...) asparagine). Active-site charge relay system residues include Asp702 and His734.

Belongs to the peptidase S9B family. DPPIV subfamily. As to quaternary structure, monomer. Homodimer. Heterodimer with Seprase (FAP). Requires homodimerization for optimal dipeptidyl peptidase activity and T-cell costimulation. Found in a membrane raft complex, at least composed of BCL10, CARD11, DPP4 and IKBKB. Associates with collagen. Interacts with PTPRC; the interaction is enhanced in an interleukin-12-dependent manner in activated lymphocytes. Interacts (via extracellular domain) with ADA; does not inhibit its dipeptidyl peptidase activity. Interacts with CAV1 (via the N-terminus); the interaction is direct. Interacts (via cytoplasmic tail) with CARD11 (via PDZ domain); its homodimerization is necessary for interaction with CARD11. Interacts with IGF2R; the interaction is direct. Interacts with GPC3. Post-translationally, the soluble form (Dipeptidyl peptidase 4 soluble form also named SDPP) derives from the membrane form (Dipeptidyl peptidase 4 membrane form also named MDPP) by proteolytic processing. In terms of processing, N- and O-Glycosylated. Phosphorylated. Mannose 6-phosphate residues in the carbohydrate moiety are necessary for interaction with IGF2R in activated T-cells. Mannose 6-phosphorylation is induced during T-cell activation.

It is found in the secreted. It localises to the cell membrane. Its subcellular location is the apical cell membrane. The protein resides in the cell projection. The protein localises to the invadopodium membrane. It is found in the lamellipodium membrane. It localises to the cell junction. Its subcellular location is the membrane raft. The enzyme catalyses Release of an N-terminal dipeptide, Xaa-Yaa-|-Zaa-, from a polypeptide, preferentially when Yaa is Pro, provided Zaa is neither Pro nor hydroxyproline.. With respect to regulation, inhibited by GPC3 and diprotin A. Cell surface glycoprotein receptor involved in the costimulatory signal essential for T-cell receptor (TCR)-mediated T-cell activation. Acts as a positive regulator of T-cell coactivation, by binding at least ADA, CAV1, IGF2R, and PTPRC. Its binding to CAV1 and CARD11 induces T-cell proliferation and NF-kappa-B activation in a T-cell receptor/CD3-dependent manner. Its interaction with ADA also regulates lymphocyte-epithelial cell adhesion. In association with FAP is involved in the pericellular proteolysis of the extracellular matrix (ECM), the migration and invasion of endothelial cells into the ECM. May be involved in the promotion of lymphatic endothelial cells adhesion, migration and tube formation. When overexpressed, enhanced cell proliferation, a process inhibited by GPC3. Also acts as a serine exopeptidase with a dipeptidyl peptidase activity that regulates various physiological processes by cleaving peptides in the circulation, including many chemokines, mitogenic growth factors, neuropeptides and peptide hormones. Removes N-terminal dipeptides sequentially from polypeptides having unsubstituted N-termini provided that the penultimate residue is proline. The polypeptide is Dipeptidyl peptidase 4 (Dpp4) (Mus musculus (Mouse)).